The following is a 115-amino-acid chain: Large ribosomal subunit protein bL20c (115 aa).

It belongs to the bacterial ribosomal protein bL20 family.

It localises to the plastid. It is found in the chloroplast. Functionally, binds directly to 23S ribosomal RNA and is necessary for the in vitro assembly process of the 50S ribosomal subunit. It is not involved in the protein synthesizing functions of that subunit. This is Large ribosomal subunit protein bL20c from Chaetosphaeridium globosum (Charophycean green alga).